The chain runs to 279 residues: 4-hydroxy-3-methylbut-2-enyl diphosphate reductase (279 aa).

Cys-12 lines the [4Fe-4S] cluster pocket. (2E)-4-hydroxy-3-methylbut-2-enyl diphosphate-binding residues include His-40 and His-70. Residues His-40 and His-70 each contribute to the dimethylallyl diphosphate site. Residues His-40 and His-70 each contribute to the isopentenyl diphosphate site. Cys-92 is a [4Fe-4S] cluster binding site. His-119 is a (2E)-4-hydroxy-3-methylbut-2-enyl diphosphate binding site. His-119 lines the dimethylallyl diphosphate pocket. Isopentenyl diphosphate is bound at residue His-119. The active-site Proton donor is Glu-121. A (2E)-4-hydroxy-3-methylbut-2-enyl diphosphate-binding site is contributed by Thr-151. A [4Fe-4S] cluster-binding site is contributed by Cys-181. (2E)-4-hydroxy-3-methylbut-2-enyl diphosphate is bound by residues Ser-209, Ser-210, Asn-211, and Ser-251. Dimethylallyl diphosphate is bound by residues Ser-209, Ser-210, Asn-211, and Ser-251. Isopentenyl diphosphate is bound by residues Ser-209, Ser-210, Asn-211, and Ser-251.

This sequence belongs to the IspH family. Requires [4Fe-4S] cluster as cofactor.

The enzyme catalyses isopentenyl diphosphate + 2 oxidized [2Fe-2S]-[ferredoxin] + H2O = (2E)-4-hydroxy-3-methylbut-2-enyl diphosphate + 2 reduced [2Fe-2S]-[ferredoxin] + 2 H(+). It carries out the reaction dimethylallyl diphosphate + 2 oxidized [2Fe-2S]-[ferredoxin] + H2O = (2E)-4-hydroxy-3-methylbut-2-enyl diphosphate + 2 reduced [2Fe-2S]-[ferredoxin] + 2 H(+). It participates in isoprenoid biosynthesis; dimethylallyl diphosphate biosynthesis; dimethylallyl diphosphate from (2E)-4-hydroxy-3-methylbutenyl diphosphate: step 1/1. It functions in the pathway isoprenoid biosynthesis; isopentenyl diphosphate biosynthesis via DXP pathway; isopentenyl diphosphate from 1-deoxy-D-xylulose 5-phosphate: step 6/6. Catalyzes the conversion of 1-hydroxy-2-methyl-2-(E)-butenyl 4-diphosphate (HMBPP) into a mixture of isopentenyl diphosphate (IPP) and dimethylallyl diphosphate (DMAPP). Acts in the terminal step of the DOXP/MEP pathway for isoprenoid precursor biosynthesis. This Thermotoga neapolitana (strain ATCC 49049 / DSM 4359 / NBRC 107923 / NS-E) protein is 4-hydroxy-3-methylbut-2-enyl diphosphate reductase.